A 273-amino-acid polypeptide reads, in one-letter code: Large ribosomal subunit protein uL2 (273 aa).

The disordered stretch occupies residues G222–K273. The segment covering S264–K273 has biased composition (basic and acidic residues).

It belongs to the universal ribosomal protein uL2 family. As to quaternary structure, part of the 50S ribosomal subunit. Forms a bridge to the 30S subunit in the 70S ribosome.

Its function is as follows. One of the primary rRNA binding proteins. Required for association of the 30S and 50S subunits to form the 70S ribosome, for tRNA binding and peptide bond formation. It has been suggested to have peptidyltransferase activity; this is somewhat controversial. Makes several contacts with the 16S rRNA in the 70S ribosome. The chain is Large ribosomal subunit protein uL2 from Syntrophobacter fumaroxidans (strain DSM 10017 / MPOB).